The following is a 533-amino-acid chain: Amidophosphoribosyltransferase (533 aa).

Residue Cys2 is the Nucleophile of the active site. One can recognise a Glutamine amidotransferase type-2 domain in the interval 2–238; that stretch reads CGILALMLAD…PGECVFIRRS (237 aa). Residues Asp383 and Asp384 each coordinate Mg(2+). Position 506 is a phosphoserine (Ser506).

The protein in the C-terminal section; belongs to the purine/pyrimidine phosphoribosyltransferase family. Mg(2+) serves as cofactor.

It catalyses the reaction 5-phospho-beta-D-ribosylamine + L-glutamate + diphosphate = 5-phospho-alpha-D-ribose 1-diphosphate + L-glutamine + H2O. The protein operates within purine metabolism; IMP biosynthesis via de novo pathway; N(1)-(5-phospho-D-ribosyl)glycinamide from 5-phospho-alpha-D-ribose 1-diphosphate: step 1/2. The polypeptide is Amidophosphoribosyltransferase (ade4) (Schizosaccharomyces pombe (strain 972 / ATCC 24843) (Fission yeast)).